A 211-amino-acid polypeptide reads, in one-letter code: Small ribosomal subunit protein uS3 (211 aa).

The KH type-2 domain maps to 38 to 106 (LRNFLKKRLY…EIYLNIQEVR (69 aa)).

This sequence belongs to the universal ribosomal protein uS3 family. Part of the 30S ribosomal subunit. Forms a tight complex with proteins S10 and S14.

Functionally, binds the lower part of the 30S subunit head. Binds mRNA in the 70S ribosome, positioning it for translation. In Geobacter sulfurreducens (strain ATCC 51573 / DSM 12127 / PCA), this protein is Small ribosomal subunit protein uS3.